The primary structure comprises 346 residues: Histidinol-phosphate aminotransferase (346 aa).

An N6-(pyridoxal phosphate)lysine modification is found at K209.

It belongs to the class-II pyridoxal-phosphate-dependent aminotransferase family. Histidinol-phosphate aminotransferase subfamily. As to quaternary structure, homodimer. It depends on pyridoxal 5'-phosphate as a cofactor.

The catalysed reaction is L-histidinol phosphate + 2-oxoglutarate = 3-(imidazol-4-yl)-2-oxopropyl phosphate + L-glutamate. It participates in amino-acid biosynthesis; L-histidine biosynthesis; L-histidine from 5-phospho-alpha-D-ribose 1-diphosphate: step 7/9. The sequence is that of Histidinol-phosphate aminotransferase from Vibrio campbellii (strain ATCC BAA-1116).